Consider the following 207-residue polypeptide: Ras-related protein Rab-8B (207 aa).

Residues Ser-17, Gly-18, Val-19, Gly-20, Lys-21, Thr-22, Cys-23, Thr-35, Ser-39, and Thr-40 each contribute to the GTP site. Thr-22 lines the Mg(2+) pocket. Short sequence motifs (switch) lie at residues 31–45 (DAFN…GIDF) and 63–80 (DTAG…YYRG). Residues Thr-40 and Asp-63 each coordinate Mg(2+). Gly-66 lines the GTP pocket. At Thr-72 the chain carries Phosphothreonine; by LRRK2. Residues Asn-121, Lys-122, Asp-124, Ala-152, and Lys-153 each coordinate GTP. Ser-180 carries the post-translational modification Phosphoserine. Cys-204 is modified (cysteine methyl ester). A lipid anchor (S-geranylgeranyl cysteine) is attached at Cys-204. Residues 205–207 (SLL) constitute a propeptide, removed in mature form.

The protein belongs to the small GTPase superfamily. Rab family. Associated with actin, delta-catenin and alpha and beta tubulins. Interacts with OTOF. Interacts with PEX5R. Interacts with RAB3IP. Interacts with VIM. Interacts with CDH1. Interacts with MICALL2. Interacts with GDI1, GDI2, CHML and CHM; phosphorylation at Thr-72 disrupts these interactions. Interacts with MICAL1. Requires Mg(2+) as cofactor. Post-translationally, phosphorylation of Thr-72 in the switch II region by LRRK2 prevents the association of RAB regulatory proteins, including CHM, CHML and RAB GDP dissociation inhibitors GDI1 and GDI2.

It is found in the cell membrane. The protein resides in the cytoplasmic vesicle. It localises to the phagosome. Its subcellular location is the phagosome membrane. The protein localises to the endosome membrane. It carries out the reaction GTP + H2O = GDP + phosphate + H(+). Regulated by guanine nucleotide exchange factors (GEFs) including RAB3IP/RABIN8 which promotes the exchange of bound GDP for free GTP. Regulated by GTPase activating proteins (GAPs) which increase the GTP hydrolysis activity. Inhibited by GDP dissociation inhibitors (GDIs). The small GTPases Rab are key regulators of intracellular membrane trafficking, from the formation of transport vesicles to their fusion with membranes. Rabs cycle between an inactive GDP-bound form and an active GTP-bound form that is able to recruit to membranes different sets of downstream effectors directly responsible for vesicle formation, movement, tethering and fusion. RAB8B may be involved in polarized vesicular trafficking and neurotransmitter release. May participate in cell junction dynamics in Sertoli cells. May also participate in the export of a subset of neosynthesized proteins through a Rab8-Rab10-Rab11-dependent endososomal export route. This chain is Ras-related protein Rab-8B, found in Homo sapiens (Human).